The primary structure comprises 371 residues: Integrator complex assembly factor WDR73 (371 aa).

WD repeat units follow at residues 81–121 (FSDR…DVIE), 273–313 (SPDP…GKKT), and 333–371 (DSAP…LQAS).

This sequence belongs to the WD repeat WDR73 family. As to quaternary structure, interacts with INTS9 and INTS11; the interaction is direct. Part of the multiprotein complex composed of BRAT1, WDR73, as well as integrator complex subunits INTS9 and INTS11.

The protein resides in the cytoplasm. It is found in the cytoskeleton. Its subcellular location is the spindle. The protein localises to the spindle pole. It localises to the cleavage furrow. Functionally, component of a multiprotein complex required for the assembly of the RNA endonuclease module of the integrator complex. Associates with INTS9 and INTS11 in the cytoplasm, stabilizing the INTS9-INTS11 heterodimer and blocking the active site of INTS11. BRAT1 then joins the complex and plugs the active site of INTS11, leading to WDR73 release and nuclear import of INTS9 and INTS11. In Mus musculus (Mouse), this protein is Integrator complex assembly factor WDR73 (Wdr73).